The primary structure comprises 101 residues: Small ribosomal subunit protein uS14 (101 aa).

This sequence belongs to the universal ribosomal protein uS14 family. In terms of assembly, part of the 30S ribosomal subunit. Contacts proteins S3 and S10.

In terms of biological role, binds 16S rRNA, required for the assembly of 30S particles and may also be responsible for determining the conformation of the 16S rRNA at the A site. In Paraburkholderia phymatum (strain DSM 17167 / CIP 108236 / LMG 21445 / STM815) (Burkholderia phymatum), this protein is Small ribosomal subunit protein uS14.